The primary structure comprises 38 residues: Humanin-like protein (38 aa).

As to expression, in the testis, expressed in Leydig cells at 10, 20 and 60 days of age (at protein level). Also expressed in pachytene spermatocytes at day 20 and in vessels, peritubular cells and spermatids at day 60. Not detected in Sertoli cells (at protein level). In the adult ovary, expressed in stromal cells, granulosa cells, theca cells and oocytes at diestrus and proestrus (at protein level). Expressed in the anterior pituitary where it is detected in lactotropes and somatotropes with lower levels in females than males (at protein level). In the hippocampus, expressed in astrocytes but not in neurons or oligodendrocytes (at protein level). Expressed in muscle, liver and hypothalamus but not in epididymal fat (at protein level). Widely expressed with highest levels in cardiac and skeletal muscle and lowest levels in lung, testis and uterus. In the CNS, levels are relatively high in the cerebellum and cortex and low in the hippocampus. In the hippocampus, lower levels are detected in ovariectomized animals than in controls.

It is found in the mitochondrion. The protein localises to the secreted. The protein resides in the cytoplasm. Its function is as follows. Plays a role as a neuroprotective factor. Protects against neuronal cell death induced by amyloid-beta peptides. Also protects against excitotoxic cell death. Prevents amyloid-beta peptide-induced spatial learning and memory impairments, protects against amyloid-beta peptide-induced suppression of hippocampal long-term potentiation, and inhibits amyloid-beta peptide-induced activation of STAT3 and inhibition of CASP3. Prevents glutamate-induced dendritic atrophy in hippocampal neurons and also prevents glutamate-induced decrease in SYP puncta number and total puncta area. Protects anterior pituitary cells from TNF-induced apoptosis. Plays a role in ovarian follicle development by acting as a cryoprotective factor for granulosa cells in the antral follicle. Increases androgen production in Leydig cells and promotes Leydig cell survival by preventing apoptosis. In Rattus norvegicus (Rat), this protein is Humanin-like protein.